The sequence spans 47 residues: MAAFTLDLMAQLPEAYQAYAPAVDVLPLIPIFFFLLVFVWQASVGFR.

A propeptide spanning residues 1–10 (MAAFTLDLMA) is cleaved from the precursor. Residues 20–40 (APAVDVLPLIPIFFFLLVFVW) traverse the membrane as a helical segment.

This sequence belongs to the PsbK family. In terms of assembly, PSII is composed of 1 copy each of membrane proteins PsbA, PsbB, PsbC, PsbD, PsbE, PsbF, PsbH, PsbI, PsbJ, PsbK, PsbL, PsbM, PsbT, PsbX, PsbY, Psb30/Ycf12, peripheral proteins PsbO, CyanoQ (PsbQ), PsbU, PsbV and a large number of cofactors. It forms dimeric complexes.

It is found in the cellular thylakoid membrane. In terms of biological role, one of the components of the core complex of photosystem II (PSII). PSII is a light-driven water:plastoquinone oxidoreductase that uses light energy to abstract electrons from H(2)O, generating O(2) and a proton gradient subsequently used for ATP formation. It consists of a core antenna complex that captures photons, and an electron transfer chain that converts photonic excitation into a charge separation. The protein is Photosystem II reaction center protein K of Prochlorococcus marinus (strain MIT 9303).